A 508-amino-acid polypeptide reads, in one-letter code: Protein FAM227B (508 aa).

Disordered regions lie at residues 1 to 22 (MAGQ…MQEP) and 485 to 508 (ASLS…EEEY). Residues 486–497 (SLSSSSSSSPSS) show a composition bias toward low complexity.

The protein belongs to the FAM227 family.

The protein is Protein FAM227B (FAM227B) of Homo sapiens (Human).